The primary structure comprises 663 residues: MSNSGKKLTQKLKKNLPVTGPQAPTLYELMQWYCLNTNTHGCRRIVVSKGRLRRWIWIVLTLIAVALIFWQCALLLMTYYSVSASITVTFQKLVYPAVTICNLNPYSYSKIKDRLATLEKTTNQTLKKIYGFTEPLIRSKRDLDVNDENSTEDIFLKQIPLFRLESIKGNQLVVSDLKTKKRTQISGKVIQRDAGSVQDSDNMVGFKLCDANNSSDCTIFTFGSGVNAIQEWYRLHYNNILAKISMEDKIAMGYKADELIVTCLFDGLSCDARNFTLFHHPLYGNCYTFNSAERGNLLVSSMGGAEYGLKVVLYIDEDEYNPYLSTAAGAKILVHDQDEYPFIEDLGTELETGTETSIGMQLTESTKLSDPYSDCTIDGSDISVENLYNKKYTLQICLNSCFQREMVRSCGCAHYDQPLPNGAKYCNYEEYPNWIYCYVKLYKQFVQEELGCQSTCRESCSFKEWTLTRSLAKWPSLNSEEWMLRVLSWELGEKLNKNLTKNDLGNLNIFYQDLNSRSISESPTYNIVTLLSNFGGQLGLWMSCSMVCGLEIVEVFFIDSFWVILRQKWHKLCNWWKNRKENEIEEIPDITVPAMAGHNNPLCVDHPICLGEDDPPTFHSALQLPQAQDCRVPRTPPPKYNTLRIQSAFHLETIDSDEDVERF.

Residues 1–55 are Cytoplasmic-facing; the sequence is MSNSGKKLTQKLKKNLPVTGPQAPTLYELMQWYCLNTNTHGCRRIVVSKGRLRRW. The helical transmembrane segment at 56–76 threads the bilayer; the sequence is IWIVLTLIAVALIFWQCALLL. Residues 77 to 544 lie on the Extracellular side of the membrane; it reads MTYYSVSASI…GGQLGLWMSC (468 aa). 8 disulfides stabilise this stretch: Cys-101/Cys-286, Cys-209/Cys-217, Cys-263/Cys-270, Cys-375/Cys-460, Cys-397/Cys-456, Cys-401/Cys-452, Cys-410/Cys-437, and Cys-412/Cys-426. Residues 545–565 form a helical membrane-spanning segment; that stretch reads SMVCGLEIVEVFFIDSFWVIL. Residues 566-663 are Cytoplasmic-facing; that stretch reads RQKWHKLCNW…IDSDEDVERF (98 aa).

This sequence belongs to the amiloride-sensitive sodium channel (TC 1.A.6) family. SCNN1G subfamily. As to quaternary structure, component of the heterotrimeric epithelial sodium channel (ENaC) composed of an alpha/SCNN1A, a beta/SCNN1B and a gamma/SCNN1G subunit.

It is found in the apical cell membrane. The catalysed reaction is Na(+)(in) = Na(+)(out). Its activity is regulated as follows. Originally identified and characterized by its inhibition by the diuretic drug amiloride. In terms of biological role, this is one of the three pore-forming subunits of the heterotrimeric epithelial sodium channel (ENaC), a critical regulator of sodium balance and fluid homeostasis. ENaC operates in epithelial tissues, where it mediates the electrodiffusion of sodium ions from extracellular fluid through the apical membrane of cells, with water following osmotically. In Xenopus laevis (African clawed frog), this protein is Epithelial sodium channel subunit gamma-2 (scnn1g-b).